Here is a 434-residue protein sequence, read N- to C-terminus: Iron transporter MagA (434 aa).

10 helical membrane-spanning segments follow: residues Pro6–Thr26, Pro31–Val51, Ala56–Leu76, Lys86–Leu106, Ser113–Ile133, Leu176–Trp196, Ser269–Trp289, Thr294–Leu314, Trp321–Leu341, and Lys357–Met377.

Belongs to the monovalent cation:proton antiporter 2 (CPA2) transporter (TC 2.A.37) family.

The protein resides in the membrane. Functionally, iron transporter, which is required for the synthesis of bacterial magnetic particles (BMPs). Probably involved in the transport of iron from the environment into the cytoplasm across the cell membrane, and then from the cytoplasm into the BMP lipid vesicle across the BMP membrane. The chain is Iron transporter MagA (magA) from Paramagnetospirillum magneticum (strain ATCC 700264 / AMB-1) (Magnetospirillum magneticum).